Here is a 546-residue protein sequence, read N- to C-terminus: (-)-5-epieremophilene synthase STPS3 (546 aa).

Asp-299, Asp-303, Asp-442, Thr-446, and Glu-450 together coordinate Mg(2+). Positions 299 to 303 match the DDXXD motif motif; sequence DDTYD.

The protein belongs to the terpene synthase family. Tpsa subfamily. As to quaternary structure, monomer. The cofactor is Mg(2+). As to expression, highly expressed in flowers and at lower levels in leaves.

It catalyses the reaction (2E,6E)-farnesyl diphosphate = (-)-5-epi-eremophilene + diphosphate. Its pathway is secondary metabolite biosynthesis; terpenoid biosynthesis. Its function is as follows. Sesquiterpene synthase that catalyzes the conversion of farnesyl diphosphate to (-)-5-epi-eremophilene. This is (-)-5-epieremophilene synthase STPS3 from Salvia miltiorrhiza (Chinese sage).